Reading from the N-terminus, the 204-residue chain is Guanylate kinase (204 aa).

One can recognise a Guanylate kinase-like domain in the interval 5 to 184; it reads GLLLVLSGPS…AVDHIKAIVD (180 aa). 12–19 serves as a coordination point for ATP; it reads GPSGVGKG.

The protein belongs to the guanylate kinase family.

The protein localises to the cytoplasm. It carries out the reaction GMP + ATP = GDP + ADP. Its function is as follows. Essential for recycling GMP and indirectly, cGMP. The chain is Guanylate kinase from Lactobacillus acidophilus (strain ATCC 700396 / NCK56 / N2 / NCFM).